Reading from the N-terminus, the 321-residue chain is Putative membrane-bound redox modulator Alx (321 aa).

At 1–6 the chain is on the periplasmic side; sequence MNTVGT. Residues 7–27 form a helical membrane-spanning segment; the sequence is PLLWGGFAVVVAIMLAIDLLL. The Cytoplasmic portion of the chain corresponds to 28–43; it reads QGRRGAHAMTMKQAAA. A helical transmembrane segment spans residues 44–64; it reads WSLVWVTLSLLFNAAFWWYLV. The Periplasmic segment spans residues 65-89; sequence QTEGRAVADPQALAFLTGYLIEKSL. The helical transmembrane segment at 90-110 threads the bilayer; that stretch reads AVDNVFVWLMLFSYFSVPAAL. At 111–113 the chain is on the cytoplasmic side; the sequence is QRR. Residues 114–134 traverse the membrane as a helical segment; that stretch reads VLVYGVLGAIVLRTIMIFTGS. Residue W135 is a topological domain, periplasmic. The chain crosses the membrane as a helical span at residues 136-156; sequence LISQFDWILYIFGAFLLFTGV. Residues 157–198 lie on the Cytoplasmic side of the membrane; the sequence is KMALAHEDESGIGDKPLVRWLRGHLRMTDTIDNEHFFVRKNG. Residues 199–219 traverse the membrane as a helical segment; it reads LLYATPLMLVLILVELSDVIF. Residues 220–225 are Periplasmic-facing; it reads AVDSIP. A helical transmembrane segment spans residues 226–246; the sequence is AIFAVTTDPFIVLTSNLFAIL. Over 247-261 the chain is Cytoplasmic; sequence GLRAMYFLLAGVAER. Residues 262 to 282 traverse the membrane as a helical segment; sequence FSMLKYGLAVILVFIGIKMLI. At 283 to 286 the chain is on the periplasmic side; the sequence is VDFY. The helical transmembrane segment at 287 to 307 threads the bilayer; sequence HIPIAVSLGVVFGILVMTFII. Residues 308-321 are Cytoplasmic-facing; it reads NAWVNYRHDKQRGG.

This sequence belongs to the TerC family.

The protein localises to the cell inner membrane. Has been proposed to be a redox modulator. This chain is Putative membrane-bound redox modulator Alx, found in Escherichia coli (strain K12).